A 295-amino-acid polypeptide reads, in one-letter code: uncharacterized protein (295 aa).

The 58-residue stretch at methionine 1–serine 58 folds into the HTH lysR-type domain. Positions isoleucine 18 to glutamine 37 form a DNA-binding region, H-T-H motif.

The protein belongs to the LysR transcriptional regulatory family.

This is an uncharacterized protein from Bacillus subtilis (strain 168).